A 473-amino-acid chain; its full sequence is Ribulose bisphosphate carboxylase large chain 2 (473 aa).

Substrate contacts are provided by Asn-116 and Thr-166. The active-site Proton acceptor is Lys-168. Position 170 (Lys-170) interacts with substrate. Mg(2+) is bound by residues Lys-194, Asp-196, and Glu-197. Lys-194 is modified (N6-carboxylysine). Catalysis depends on His-287, which acts as the Proton acceptor. Residues Arg-288, His-320, and Ser-372 each coordinate substrate.

The protein belongs to the RuBisCO large chain family. Type I subfamily. Heterohexadecamer of 8 large chains and 8 small chains. It depends on Mg(2+) as a cofactor.

The catalysed reaction is 2 (2R)-3-phosphoglycerate + 2 H(+) = D-ribulose 1,5-bisphosphate + CO2 + H2O. The enzyme catalyses D-ribulose 1,5-bisphosphate + O2 = 2-phosphoglycolate + (2R)-3-phosphoglycerate + 2 H(+). In terms of biological role, ruBisCO catalyzes two reactions: the carboxylation of D-ribulose 1,5-bisphosphate, the primary event in carbon dioxide fixation, as well as the oxidative fragmentation of the pentose substrate. Both reactions occur simultaneously and in competition at the same active site. This Acidithiobacillus ferrooxidans (strain ATCC 23270 / DSM 14882 / CIP 104768 / NCIMB 8455) (Ferrobacillus ferrooxidans (strain ATCC 23270)) protein is Ribulose bisphosphate carboxylase large chain 2.